We begin with the raw amino-acid sequence, 690 residues long: Eukaryotic translation initiation factor 3 subunit B (690 aa).

Residues 1–11 (MAKKKSEEHSG) show a composition bias toward basic and acidic residues. Positions 1–36 (MAKKKSEEHSGADANDSDYQEEPNFEDPPGFVDNIS) are disordered. Acidic residues predominate over residues 15 to 25 (NDSDYQEEPNF). Positions 57-141 (SVVVVDNIPK…HTFAVNLFTD (85 aa)) constitute an RRM domain. 5 WD repeats span residues 207 to 246 (TRERFTDTFVKWSPLGTYVVTFHKPGVAIWGGSSFQKIQK), 293 to 331 (DGMSVLSMFRWSHDDKFVARMGENSIHIYETPSFFLLDL), 334 to 369 (IKIPGIRGFSWSPTDNVIAYWVEEQNQIPARVTLME), 442 to 484 (EIRE…KPSL), and 530 to 575 (PDHF…IKRT). The stretch at 595–645 (EEKQKEIKKNLKKYYAAFEQKDRLRLTRASKELLEKRSQLRETFMEYRNKR) forms a coiled coil.

It belongs to the eIF-3 subunit B family. Component of the eukaryotic translation initiation factor 3 (eIF-3) complex. The eIF-3 complex interacts with pix. Interacts with mxt.

It is found in the cytoplasm. RNA-binding component of the eukaryotic translation initiation factor 3 (eIF-3) complex, which is involved in protein synthesis of a specialized repertoire of mRNAs and, together with other initiation factors, stimulates binding of mRNA and methionyl-tRNAi to the 40S ribosome. The eIF-3 complex specifically targets and initiates translation of a subset of mRNAs involved in cell proliferation. The protein is Eukaryotic translation initiation factor 3 subunit B of Drosophila yakuba (Fruit fly).